The primary structure comprises 732 residues: MERQVLLSEPEEAAALYRGLSRQPALSAACLGPEVTTQYGGRYRTVHTEWTQRDLERMENIRFCRQYLVFHDGDSVVFAGPAGNSVETRGELLSRESPSGTMKAVLRKAGGTGTAEEKQFLEVWEKNRKLKSFNLSALEKHGPVYEDDCFGCLSWSHSETHLLYVADKKRPKAESFFQTKALDVTGSDDEMARTKKPDQAIKGDQFLFYEDWGENMVSKSTPVLCVLDIESGNISVLEGVPESVSPGQAFWAPGDTGVVFVGWWHEPFRLGIRFCTNRRSALYYVDLTGGKCELLSDESVAVTSPRLSPDQCRIVYLRFPSLVPHQQCGQLCLYDWYTRVTSVVVDIVPRQLGEDFSGIYCSLLPLGCWSADSQRVVFDSPQRSRQDLFAVDTQMGSVTSLTAGGSGGSWKLLTIDRDLMVVQFSTPSVPPSLKVGFLPPAGKEQAVSWVSLEEAEPFPDISWSIRVLQPPPQQEHVQYAGLDFEAILLQPSNSPEKTQVPMVVMPHGGPHSSFVTAWMLFPAMLCKMGFAVLLVNYRGSTGFGQDSILSLPGNVGHQDVKDVQFAVEQVLQEEHFDAGRVALMGGSHGGFLSCHLIGQYPETYSACVVRNPVINIASMMGSTDIPDWCMVEAGFSYSSDCLPDLSVWAAMLDKSPIKYAPQVKTPLLLMLGQEDRRVPFKQGMEYYRVLKARNVPVRLLLYPKSTHALSEVEVESDSFMNAVLWLCTHLGS.

Position 1 is an N-acetylmethionine (Met-1). Residue Ser-187 is modified to Phosphoserine. Active-site charge relay system residues include Ser-587, Asp-675, and His-707.

It belongs to the peptidase S9C family. As to quaternary structure, homotetramer. Expressed in the liver (at protein level).

It is found in the cytoplasm. It catalyses the reaction Cleavage of an N-acetyl or N-formyl amino acid from the N-terminus of a polypeptide.. With respect to regulation, homotetramerization is required for activity. Tetramerization results in the formation of a gated channel which is involved in substrate selection and substrate access to the catalytic sites. Functionally, this enzyme catalyzes the hydrolysis of the N-terminal peptide bond of an N-acetylated peptide to generate an N-acetylated amino acid and a peptide with a free N-terminus. It preferentially cleaves off Ac-Ala, Ac-Met and Ac-Ser. Also, involved in the degradation of oxidized and glycated proteins. The polypeptide is Acylamino-acid-releasing enzyme (APEH) (Sus scrofa (Pig)).